Consider the following 34-residue polypeptide: U4-theraphotoxin-Hs1a (34 aa).

Intrachain disulfides connect Cys3–Cys17, Cys10–Cys22, and Cys16–Cys33.

It belongs to the neurotoxin 14 (magi-1) family. 05 (ICK-7) subfamily. Expressed by the venom gland.

The protein localises to the secreted. Intracisternal injection paralyzes mice. In Cyriopagopus schmidti (Chinese bird spider), this protein is U4-theraphotoxin-Hs1a.